Reading from the N-terminus, the 80-residue chain is Acyl carrier protein (80 aa).

Positions 4-79 (DATLEKVRSI…DAVKYIEDKQ (76 aa)) constitute a Carrier domain. An O-(pantetheine 4'-phosphoryl)serine modification is found at serine 39.

Belongs to the acyl carrier protein (ACP) family. 4'-phosphopantetheine is transferred from CoA to a specific serine of apo-ACP by AcpS. This modification is essential for activity because fatty acids are bound in thioester linkage to the sulfhydryl of the prosthetic group.

Its subcellular location is the cytoplasm. The protein operates within lipid metabolism; fatty acid biosynthesis. Functionally, carrier of the growing fatty acid chain in fatty acid biosynthesis. This chain is Acyl carrier protein, found in Prochlorococcus marinus (strain MIT 9211).